Here is a 948-residue protein sequence, read N- to C-terminus: Coiled-coil domain-containing protein 66 (948 aa).

Phosphothreonine is present on residues Thr115 and Thr121. Ser369 carries the post-translational modification Phosphoserine. Residues 458–499 (DRRRQKQLEHQKAITAQVEEKRRKKQLEEEQRKKEEQEEELR) form a disordered region. The stretch at 467-558 (HQKAITAQVE…EQRIRELAQK (92 aa)) forms a coiled coil. The segment at 570 to 948 (GVDTIQMEYN…NQEESFGSSF (379 aa)) is mediates localization to cilia, centrosomes and spindle microtubules and the interaction with PCM1, CEP290, CEP104 and CSPP1. Residue Ser606 is modified to Phosphoserine. Disordered regions lie at residues 690–713 (QTKH…KRYI) and 788–808 (SFSK…RTQQ).

In terms of assembly, homodimer; disulfide-linked. Interacts with CEP290. Interacts with PCM1. Interacts with ARMC9, TOGARAM1, CSPP1 and CEP104. Interacts with CDK5RAP2, CEP152, CEP192, TBG1 and PRC1. Widely expressed (at protein level). Expressed in retina, mainly in photoreceptors but also in outer plexiform and ganglion cell layers (at protein level).

The protein localises to the cytoplasm. It localises to the cytoskeleton. The protein resides in the microtubule organizing center. It is found in the centrosome. Its subcellular location is the centriolar satellite. The protein localises to the cell projection. It localises to the cilium. The protein resides in the cilium basal body. It is found in the cilium axoneme. Its subcellular location is the photoreceptor inner segment. The protein localises to the photoreceptor outer segment. It localises to the spindle. The protein resides in the midbody. In terms of biological role, microtubule-binding protein required for ciliogenesis. May function in ciliogenesis by mediating the transport of proteins like BBS4 to the cilium, but also through the organization of the centriolar satellites. Required for the assembly of signaling-competent cilia with proper structure and length. Mediates this function in part by regulating transition zone assembly and basal body recruitment of the IFT-B complex. Cooperates with the ciliopathy proteins CSPP1 and CEP104 during cilium length regulation. Plays two important roles during cell division. First, is required for mitotic progression via regulation of spindle assembly, organization and orientation, levels of spindle microtubules (MTs), kinetochore-fiber integrity, and chromosome alignment. Second, functions during cytokinesis in part by regulating assembly and organization of central spindle and midbody MTs. Plays a role in retina morphogenesis and/or homeostasis. In Homo sapiens (Human), this protein is Coiled-coil domain-containing protein 66.